The chain runs to 350 residues: Induced myeloid leukemia cell differentiation protein Mcl-1 homolog (350 aa).

Residue lysine 5 forms a Glycyl lysine isopeptide (Lys-Gly) (interchain with G-Cter in ubiquitin) linkage. The tract at residues 23 to 95 is disordered; sequence AGSGGASSSG…GPNVSATPPR (73 aa). Over residues 31 to 41 the composition is skewed to low complexity; that stretch reads SGGRLLASGRE. The span at 50-61 shows a compositional bias: gly residues; it reads GGEAGAVIGGSA. The tract at residues 104–175 is PEST-like; it reads RASPPEEMEG…PAEEEEDELY (72 aa). Serine 121 carries the phosphoserine modification. Residue lysine 136 forms a Glycyl lysine isopeptide (Lys-Gly) (interchain with G-Cter in ubiquitin) linkage. The segment at 150–169 is disordered; it reads ASSGPGMDGSLPSTPPPAEE. Serine 159 is subject to Phosphoserine; by GSK3-alpha and GSK3-beta. Serine 162 carries the phosphoserine modification. Threonine 163 carries the phosphothreonine modification. Glycyl lysine isopeptide (Lys-Gly) (interchain with G-Cter in ubiquitin) cross-links involve residues lysine 194 and lysine 197. The BH3 motif lies at 209–223; sequence ALETLQRVGDGVQRN. Positions 252–272 match the BH1 motif; sequence HVFSDGVTNWGRIVTLISFGA. Positions 304 to 319 match the BH2 motif; sequence DWLVKQRGWDGFVEFF. Residues 327 to 349 form a helical membrane-spanning segment; the sequence is GIRNVLLAFAGVAGVGAGLAYLI.

The protein belongs to the Bcl-2 family. Interacts with HIF3A (via C-terminus domain). Interacts with BOK, BIK, BAX, BAK1, and TPT1. Interacts with unphosphorylated BAD. Interacts with BMF, BBC3 and PMAIP1. Interacts with BOP. Interacts with BCL2L11; may sequester BCL2L11 to prevent its pro-apoptotic activity. Interacts with GIMAP5 and HSPA8/HSC70; the interaction between HSPA8 and MCL1 is impaired in the absence of GIMAP5. Post-translationally, cleaved by CASP3 during apoptosis, yielding a pro-apoptotic C-terminal fragment. Rapidly degraded in the absence of phosphorylation in the PEST region. In terms of processing, phosphorylated on Ser-159, by GSK3, in response to IL3/interleukin-3 withdrawal. Phosphorylation at Ser-159 induces ubiquitination and proteasomal degradation, abrogating the anti-apoptotic activity. Treatment with taxol or okadaic acid induces phosphorylation on additional sites. Post-translationally, ubiquitinated. Ubiquitination is induced by phosphorylation at Ser-159. Deubiquitinated by USP20; leading to increased stability. Detected in peripheral blood mononuclear cells and bone marrow.

It is found in the membrane. The protein localises to the cytoplasm. The protein resides in the mitochondrion. It localises to the nucleus. Its subcellular location is the nucleoplasm. In terms of biological role, involved in the regulation of apoptosis versus cell survival, and in the maintenance of viability but not of proliferation. Mediates its effects by interactions with a number of other regulators of apoptosis. The protein is Induced myeloid leukemia cell differentiation protein Mcl-1 homolog (MCL1) of Canis lupus familiaris (Dog).